A 333-amino-acid polypeptide reads, in one-letter code: Galactinol synthase 5 (333 aa).

K103 is a catalytic residue. Residues D119, D121, and H257 each coordinate Mn(2+).

It belongs to the glycosyltransferase 8 family. Galactosyltransferase subfamily. A divalent metal cation is required as a cofactor.

Its subcellular location is the cytoplasm. It carries out the reaction myo-inositol + UDP-alpha-D-galactose = alpha-D-galactosyl-(1-&gt;3)-1D-myo-inositol + UDP + H(+). In terms of biological role, galactinol synthase involved in the biosynthesis of raffinose family oligosaccharides (RFOs) that function as osmoprotectants. May promote plant stress tolerance. In Arabidopsis thaliana (Mouse-ear cress), this protein is Galactinol synthase 5 (GOLS5).